The primary structure comprises 687 residues: Polyphosphate kinase (687 aa).

Asn-45 is a binding site for ATP. The Mg(2+) site is built by Arg-375 and Arg-405. His-435 functions as the Phosphohistidine intermediate in the catalytic mechanism. ATP is bound by residues Tyr-472, Arg-568, and His-596.

It belongs to the polyphosphate kinase 1 (PPK1) family. Mg(2+) serves as cofactor. An intermediate of this reaction is the autophosphorylated ppk in which a phosphate is covalently linked to a histidine residue through a N-P bond.

The catalysed reaction is [phosphate](n) + ATP = [phosphate](n+1) + ADP. Functionally, catalyzes the reversible transfer of the terminal phosphate of ATP to form a long-chain polyphosphate (polyP). In Burkholderia cenocepacia (strain HI2424), this protein is Polyphosphate kinase.